Here is a 513-residue protein sequence, read N- to C-terminus: Protein disulfide-isomerase 2 (513 aa).

The N-terminal stretch at 1–20 is a signal peptide; that stretch reads MNKFLALLFVLALFANIAFS. 2 consecutive Thioredoxin domains span residues 21–147 and 355–486; these read CEGH…EELK and DVIG…DNAA. Residues cysteine 70, cysteine 73, cysteine 406, and cysteine 409 each act as nucleophile in the active site. Cystine bridges form between cysteine 70–cysteine 73 and cysteine 406–cysteine 409. The disordered stretch occupies residues 491-513; the sequence is LPSSQTDDNVESKKDSSAKHDEL. Basic and acidic residues predominate over residues 500 to 513; it reads VESKKDSSAKHDEL. The Prevents secretion from ER signature appears at 510–513; it reads HDEL.

This sequence belongs to the protein disulfide isomerase family.

The protein resides in the endoplasmic reticulum lumen. The enzyme catalyses Catalyzes the rearrangement of -S-S- bonds in proteins.. Participates in the folding of proteins containing disulfide bonds, may be involved in glycosylation, prolyl hydroxylation and triglyceride transfer. In Dictyostelium discoideum (Social amoeba), this protein is Protein disulfide-isomerase 2 (pdi2).